The primary structure comprises 195 residues: Protein GrpE (195 aa).

It belongs to the GrpE family. In terms of assembly, homodimer.

It is found in the cytoplasm. Functionally, participates actively in the response to hyperosmotic and heat shock by preventing the aggregation of stress-denatured proteins, in association with DnaK and GrpE. It is the nucleotide exchange factor for DnaK and may function as a thermosensor. Unfolded proteins bind initially to DnaJ; upon interaction with the DnaJ-bound protein, DnaK hydrolyzes its bound ATP, resulting in the formation of a stable complex. GrpE releases ADP from DnaK; ATP binding to DnaK triggers the release of the substrate protein, thus completing the reaction cycle. Several rounds of ATP-dependent interactions between DnaJ, DnaK and GrpE are required for fully efficient folding. The chain is Protein GrpE from Francisella tularensis subsp. mediasiatica (strain FSC147).